Here is a 153-residue protein sequence, read N- to C-terminus: Probable trafficking protein particle complex subunit 2 (153 aa).

Belongs to the TRAPP small subunits family. Sedlin subfamily. In terms of assembly, part of the multisubunit TRAPP (transport protein particle) complex.

The protein resides in the cytoplasm. Its subcellular location is the perinuclear region. It localises to the endoplasmic reticulum. It is found in the golgi apparatus. In terms of biological role, may play a role in vesicular transport from endoplasmic reticulum to Golgi. In Nematostella vectensis (Starlet sea anemone), this protein is Probable trafficking protein particle complex subunit 2.